Consider the following 568-residue polypeptide: Oxygen-dependent choline dehydrogenase (568 aa).

8–37 (DYIIIGAGSAGNTLAARLTEDAGVTVLLLE) is a binding site for FAD. Histidine 477 functions as the Proton acceptor in the catalytic mechanism.

The protein belongs to the GMC oxidoreductase family. It depends on FAD as a cofactor.

It catalyses the reaction choline + A = betaine aldehyde + AH2. The catalysed reaction is betaine aldehyde + NAD(+) + H2O = glycine betaine + NADH + 2 H(+). It functions in the pathway amine and polyamine biosynthesis; betaine biosynthesis via choline pathway; betaine aldehyde from choline (cytochrome c reductase route): step 1/1. Its function is as follows. Involved in the biosynthesis of the osmoprotectant glycine betaine. Catalyzes the oxidation of choline to betaine aldehyde and betaine aldehyde to glycine betaine at the same rate. The protein is Oxygen-dependent choline dehydrogenase of Pseudomonas savastanoi pv. phaseolicola (strain 1448A / Race 6) (Pseudomonas syringae pv. phaseolicola (strain 1448A / Race 6)).